Reading from the N-terminus, the 383-residue chain is MTTIFYTEPELVLSHGRKVLFINPNDLQIFKDIEVPADLTTCGFKIEATDEGEPKATCGSNLEVSILNVCYSPDRQLIALTTVGQKALLLYKSRPEHALLLSVRALARASSALAFAPDSSSVLVTDKTGDCYQYDCVEVEAPPKLLLGHLSIVYDIVWTPDLKHIITCDRDDKIRVTNYPATHDIHSYCLGHKEFVSGLALLPGNEGLLISISGDKTLRLWNYLTGKEVLQQQLPAPAVRLQMRELIQSKRYLLAVLFYDHVEAIGLYELELKEAAWSIAKESLVRAEAGSWSISNFALTSDRIYVAGAVNERLTLRVYNSADGKQAESVPAGWLDMVMENFAEQTCVPEDLSAWFKKRYDNISEYMERKKRRIEDQQQQHQK.

5 WD repeats span residues 61–101, 105–144, 148–187, 191–231, and 289–329; these read NLEV…ALLL, ALAR…APPK, GHLS…DIHS, GHKE…EVLQ, and AGSW…QAES.

Belongs to the WD repeat TRM82 family. As to quaternary structure, forms a heterodimer with the catalytic subunit Mettl1. Interacts with mei-P26 and weakly interacts with bgcn; required for the function or formation of the mei-P26-bgcn-bam-sxl complex. Interacts with nanos; may be involved in mei-P26-dependent derepression of the BMP signaling pathway. Interacts with Myc; the interaction may be mediated by mei-P26 and may be involved in the regulation of ribosome biogenesis. In testis, it is present at high level in hub cells, a niche for germline stem cells of testis. Ubiquitously expressed in all testicular cells throughout spermatogenesis. Ubiquitously expressed in all germline and somatic cells of the ovary.

It localises to the nucleus. It is found in the cytoplasm. It participates in tRNA modification; N(7)-methylguanine-tRNA biosynthesis. In terms of biological role, required for the Mettl1-dependent formation of N(7)-methylguanine at position 46 (m7G46) in tRNA. In the Mettl1-wuho methyltransferase complex, it is required to stabilize and induce conformational changes of the catalytic subunit. Required for binding of nanos mRNA and repression of translation by the mei-P26-bgcn-bam-sxl complex. May cooperate with mei-P26 and nanos to derepress the BMP signaling pathway. May cooperate with mei-P26 to suppress expression of a subset of microRNAs. May cooperate with mei-P26 to regulate bam expression levels in germline cells during gametogenesis. Required to promote mitosis to meiosis transition during gametogenesis. May regulate germline cell division in part by regulating ribosome biogenesis. This chain is tRNA (guanine-N(7)-)-methyltransferase non-catalytic subunit wuho, found in Drosophila mojavensis (Fruit fly).